Reading from the N-terminus, the 299-residue chain is GTPase Era (299 aa).

One can recognise an Era-type G domain in the interval 4–171 (KSGFVAILGR…MEILKENLDE (168 aa)). A G1 region spans residues 12–19 (GRPNVGKS). 12 to 19 (GRPNVGKS) serves as a coordination point for GTP. The tract at residues 38–42 (QTTRN) is G2. The segment at 59 to 62 (DTPG) is G3. GTP-binding positions include 59–63 (DTPGI) and 121–124 (NKID). The G4 stretch occupies residues 121-124 (NKID). Residues 150 to 152 (ISA) are G5. Residues 202-280 (TREEIPHSVA…FLETWVKVKK (79 aa)) form the KH type-2 domain.

It belongs to the TRAFAC class TrmE-Era-EngA-EngB-Septin-like GTPase superfamily. Era GTPase family. As to quaternary structure, monomer.

Its subcellular location is the cytoplasm. The protein resides in the cell membrane. In terms of biological role, an essential GTPase that binds both GDP and GTP, with rapid nucleotide exchange. Plays a role in 16S rRNA processing and 30S ribosomal subunit biogenesis and possibly also in cell cycle regulation and energy metabolism. The sequence is that of GTPase Era from Streptococcus suis (strain 98HAH33).